The following is a 477-amino-acid chain: 3-isopropylmalate dehydratase large subunit (477 aa).

Positions 358, 419, and 422 each coordinate [4Fe-4S] cluster.

It belongs to the aconitase/IPM isomerase family. LeuC type 1 subfamily. As to quaternary structure, heterodimer of LeuC and LeuD. Requires [4Fe-4S] cluster as cofactor.

It catalyses the reaction (2R,3S)-3-isopropylmalate = (2S)-2-isopropylmalate. Its pathway is amino-acid biosynthesis; L-leucine biosynthesis; L-leucine from 3-methyl-2-oxobutanoate: step 2/4. In terms of biological role, catalyzes the isomerization between 2-isopropylmalate and 3-isopropylmalate, via the formation of 2-isopropylmaleate. This is 3-isopropylmalate dehydratase large subunit from Acinetobacter baylyi (strain ATCC 33305 / BD413 / ADP1).